We begin with the raw amino-acid sequence, 438 residues long: MRISIFGLGYVGAVCAGCLSARGHDVVGVDISSTKIDLINNGKSPIVEPGLEELLQKGISTGKLRGTTDFAEAIRATDLSMICVGTPSKKNGDLELDYIESVCREIGYVLRDKATRHTIVVRSTVLPGTVANVVIPILEDCSGKKAGVDFGVAVNPEFLRESTAIKDYDLPPMTVIGEFDKASGDVLQSLYEELDAPIIRKDIAVAEMIKYTCNVWHATKVTFANEIGNIAKAVGVDGREVMDVVCQDKALNLSQYYMRPGFAFGGSCLPKDVRALTYRASSLDVEAPLLNSLMRSNTSQVQNAFDMVASYDTRKVALLGLSFKAGTDDLRESPLVELAEMLIGKGFDLSIFDSNVEYARVHGANKDYIESKIPHVSSLLNSDFDQVINDSDVIILGNRDERFRALANKTPEGKRVIDLVGFMTNATSEDGRAEGICW.

NAD(+)-binding residues include Tyr10, Val11, Asp30, Lys35, Thr86, and Thr124. GDP-alpha-D-mannuronate contacts are provided by Glu161, Lys210, Asn214, His217, Asn225, Tyr256, Tyr257, Arg259, Phe262, and Gly265. Residue Cys268 is part of the active site. Lys271 lines the NAD(+) pocket. GDP-alpha-D-mannuronate is bound at residue Lys324. Arg331 serves as a coordination point for NAD(+).

Belongs to the UDP-glucose/GDP-mannose dehydrogenase family.

The enzyme catalyses GDP-alpha-D-mannose + 2 NAD(+) + H2O = GDP-alpha-D-mannuronate + 2 NADH + 3 H(+). It functions in the pathway glycan biosynthesis; alginate biosynthesis. Its function is as follows. Catalyzes the oxidation of guanosine diphospho-D-mannose (GDP-D-mannose) to GDP-D-mannuronic acid, a precursor for alginate polymerization. The alginate layer causes a mucoid phenotype and provides a protective barrier against host immune defenses and antibiotics. This chain is GDP-mannose 6-dehydrogenase (algD), found in Pseudomonas savastanoi pv. phaseolicola (Pseudomonas syringae pv. phaseolicola).